A 136-amino-acid polypeptide reads, in one-letter code: Large ribosomal subunit protein eL27 (136 aa).

The region spanning 5 to 40 (MKPGKVVMVLAGRYAGRKAVIVKNIDDGTADRPYSH) is the KOW domain.

Belongs to the eukaryotic ribosomal protein eL27 family. Component of the large ribosomal subunit.

The protein localises to the cytoplasm. It localises to the cytosol. It is found in the rough endoplasmic reticulum. In terms of biological role, component of the large ribosomal subunit. The protein is Large ribosomal subunit protein eL27 (rpl27) of Ictalurus punctatus (Channel catfish).